Reading from the N-terminus, the 437-residue chain is Sorting nexin-30 (437 aa).

A disordered region spans residues 1-45; the sequence is MAGGPPKALPSTGPQSLRDMPHPLAGSSSEEAVGGDSTPSPDLLM. At threonine 38 the chain carries Phosphothreonine. The residue at position 40 (serine 40) is a Phosphoserine. A PX domain is found at 89–210; it reads RDLFVTVDDP…VFLTAKDLNA (122 aa). 4 residues coordinate a 1,2-diacyl-sn-glycero-3-phospho-(1D-myo-inositol-3-phosphate): arginine 132, glutamine 134, lysine 162, and arginine 176. Residues 234-437 form the BAR domain; that stretch reads KLRSRPLEFA…PLLQEKQETK (204 aa).

This sequence belongs to the sorting nexin family. As to quaternary structure, heterodimer; heterodimerizes with SNX4.

The protein localises to the early endosome membrane. Involved in the regulation of endocytosis and in several stages of intracellular trafficking. Together with SNX4, involved in autophagosome assembly. The chain is Sorting nexin-30 from Mus musculus (Mouse).